Reading from the N-terminus, the 171-residue chain is Ribosome-binding factor A (171 aa).

Residues 120 to 132 (AALAAAAQPAGDP) show a composition bias toward low complexity. A disordered region spans residues 120 to 171 (AALAAAAQPAGDPDPYKKPVDHTDDWDEDDEDDRDGDDAVDALDAAADVPRL). Residues 133-142 (DPYKKPVDHT) show a composition bias toward basic and acidic residues. Positions 143 to 160 (DDWDEDDEDDRDGDDAVD) are enriched in acidic residues. Residues 161–171 (ALDAAADVPRL) show a composition bias toward low complexity.

This sequence belongs to the RbfA family. In terms of assembly, monomer. Binds 30S ribosomal subunits, but not 50S ribosomal subunits or 70S ribosomes.

It localises to the cytoplasm. Functionally, one of several proteins that assist in the late maturation steps of the functional core of the 30S ribosomal subunit. Associates with free 30S ribosomal subunits (but not with 30S subunits that are part of 70S ribosomes or polysomes). Required for efficient processing of 16S rRNA. May interact with the 5'-terminal helix region of 16S rRNA. The polypeptide is Ribosome-binding factor A (Kineococcus radiotolerans (strain ATCC BAA-149 / DSM 14245 / SRS30216)).